The sequence spans 315 residues: Methionyl-tRNA formyltransferase (315 aa).

A (6S)-5,6,7,8-tetrahydrofolate-binding site is contributed by 117 to 120 (SLLP).

It belongs to the Fmt family.

It catalyses the reaction L-methionyl-tRNA(fMet) + (6R)-10-formyltetrahydrofolate = N-formyl-L-methionyl-tRNA(fMet) + (6S)-5,6,7,8-tetrahydrofolate + H(+). In terms of biological role, attaches a formyl group to the free amino group of methionyl-tRNA(fMet). The formyl group appears to play a dual role in the initiator identity of N-formylmethionyl-tRNA by promoting its recognition by IF2 and preventing the misappropriation of this tRNA by the elongation apparatus. The polypeptide is Methionyl-tRNA formyltransferase (Methylibium petroleiphilum (strain ATCC BAA-1232 / LMG 22953 / PM1)).